The following is a 434-amino-acid chain: Maltoporin (434 aa).

Residues 1-25 form the signal peptide; the sequence is MMTTLRKLPLALAIAAGVLTTQAMA.

This sequence belongs to the porin LamB (TC 1.B.3) family. As to quaternary structure, homotrimer formed of three 18-stranded antiparallel beta-barrels, containing three independent channels.

The protein resides in the cell outer membrane. It catalyses the reaction beta-maltose(in) = beta-maltose(out). In terms of biological role, involved in the transport of maltose and maltodextrins. This is Maltoporin from Serratia proteamaculans (strain 568).